The following is a 220-amino-acid chain: Protein CREG1 (220 aa).

Positions 1-31 (MAARAPELARSLLAALLAPALVALLVSPASG) are cleaved as a signal peptide. Residues 30-53 (SGRGGRDHGDWDVDRRLPPLPPRE) form a disordered region. Basic and acidic residues predominate over residues 33 to 53 (GGRDHGDWDVDRRLPPLPPRE). Asn160 and Asn216 each carry an N-linked (GlcNAc...) asparagine glycan.

This sequence belongs to the CREG family. Homodimer. Interacts with IGF2R; the interaction is dependent on glycosylation. Post-translationally, N-glycosylated. Widely expressed.

The protein localises to the secreted. May contribute to the transcriptional control of cell growth and differentiation. Antagonizes transcriptional activation and cellular transformation by the adenovirus E1A protein. The transcriptional control activity of cell growth requires interaction with IGF2R. The sequence is that of Protein CREG1 (Creg1) from Mus musculus (Mouse).